The primary structure comprises 197 residues: Holliday junction branch migration complex subunit RuvA (197 aa).

The domain I stretch occupies residues 1-63; it reads MIALLNGQLI…EDALLLFGFL (63 aa). A domain II region spans residues 64 to 142; sequence TETEKDLFGL…PVQAVPGNAP (79 aa). Residues 142–146 form a flexible linker region; it reads PLPAE. Positions 147-197 are domain III; it reads TAGDLREDALSALVNLGYKENLSRKALDGIDTAPDAPLEDILKQALKLLMR.

Belongs to the RuvA family. In terms of assembly, homotetramer. Forms an RuvA(8)-RuvB(12)-Holliday junction (HJ) complex. HJ DNA is sandwiched between 2 RuvA tetramers; dsDNA enters through RuvA and exits via RuvB. An RuvB hexamer assembles on each DNA strand where it exits the tetramer. Each RuvB hexamer is contacted by two RuvA subunits (via domain III) on 2 adjacent RuvB subunits; this complex drives branch migration. In the full resolvosome a probable DNA-RuvA(4)-RuvB(12)-RuvC(2) complex forms which resolves the HJ.

The protein localises to the cytoplasm. In terms of biological role, the RuvA-RuvB-RuvC complex processes Holliday junction (HJ) DNA during genetic recombination and DNA repair, while the RuvA-RuvB complex plays an important role in the rescue of blocked DNA replication forks via replication fork reversal (RFR). RuvA specifically binds to HJ cruciform DNA, conferring on it an open structure. The RuvB hexamer acts as an ATP-dependent pump, pulling dsDNA into and through the RuvAB complex. HJ branch migration allows RuvC to scan DNA until it finds its consensus sequence, where it cleaves and resolves the cruciform DNA. The polypeptide is Holliday junction branch migration complex subunit RuvA (Syntrophotalea carbinolica (strain DSM 2380 / NBRC 103641 / GraBd1) (Pelobacter carbinolicus)).